The sequence spans 324 residues: NADH-ubiquinone oxidoreductase chain 1 (324 aa).

Transmembrane regions (helical) follow at residues 9-29 (VLNP…LTLL), 75-95 (FLFL…WAPM), 106-126 (LGVL…LGSG), 146-166 (ISYE…TGGF), 177-197 (SIWL…STLA), 237-257 (ILLM…IPAL), 259-279 (ELTA…FLWV), and 299-319 (FLPM…ALAG).

The protein belongs to the complex I subunit 1 family.

It localises to the mitochondrion inner membrane. The enzyme catalyses a ubiquinone + NADH + 5 H(+)(in) = a ubiquinol + NAD(+) + 4 H(+)(out). Functionally, core subunit of the mitochondrial membrane respiratory chain NADH dehydrogenase (Complex I) that is believed to belong to the minimal assembly required for catalysis. Complex I functions in the transfer of electrons from NADH to the respiratory chain. The immediate electron acceptor for the enzyme is believed to be ubiquinone. The sequence is that of NADH-ubiquinone oxidoreductase chain 1 (MT-ND1) from Thymallus arcticus (Arctic grayling).